Reading from the N-terminus, the 96-residue chain is YcgL domain-containing protein VS_0884 (96 aa).

The region spanning 1 to 84 (MLCSIYKSSK…PPVNELELHK (84 aa)) is the YcgL domain.

The polypeptide is YcgL domain-containing protein VS_0884 (Vibrio atlanticus (strain LGP32) (Vibrio splendidus (strain Mel32))).